The sequence spans 55 residues: Large ribosomal subunit protein bL33 (55 aa).

It belongs to the bacterial ribosomal protein bL33 family.

The protein is Large ribosomal subunit protein bL33 of Bartonella henselae (strain ATCC 49882 / DSM 28221 / CCUG 30454 / Houston 1) (Rochalimaea henselae).